A 619-amino-acid polypeptide reads, in one-letter code: Chaperone protein HscA homolog (619 aa).

Belongs to the heat shock protein 70 family.

Its function is as follows. Chaperone involved in the maturation of iron-sulfur cluster-containing proteins. Has a low intrinsic ATPase activity which is markedly stimulated by HscB. The protein is Chaperone protein HscA homolog of Methylococcus capsulatus (strain ATCC 33009 / NCIMB 11132 / Bath).